The sequence spans 174 residues: Transcription antitermination protein NusB (174 aa).

The interval 1–28 is disordered; it reads MVEPKKPFMRKPPPKTGDKKPGDRKANR. Residues 16–25 are compositionally biased toward basic and acidic residues; sequence TGDKKPGDRK.

Belongs to the NusB family.

Functionally, involved in transcription antitermination. Required for transcription of ribosomal RNA (rRNA) genes. Binds specifically to the boxA antiterminator sequence of the ribosomal RNA (rrn) operons. The chain is Transcription antitermination protein NusB from Rhodopseudomonas palustris (strain BisB5).